Consider the following 152-residue polypeptide: Transcriptional regulator MraZ (152 aa).

SpoVT-AbrB domains are found at residues 5-52 and 81-124; these read ATLV…PLPA and ASEC…DEQT.

The protein belongs to the MraZ family. In terms of assembly, forms oligomers.

It localises to the cytoplasm. The protein resides in the nucleoid. Negatively regulates its own expression and that of the subsequent genes in the proximal part of the division and cell wall (dcw) gene cluster. Acts by binding directly to DNA. May also regulate the expression of genes outside the dcw cluster. In Sodalis glossinidius (strain morsitans), this protein is Transcriptional regulator MraZ.